A 734-amino-acid chain; its full sequence is Photosystem I P700 chlorophyll a apoprotein A2 (734 aa).

8 helical membrane passes run 46–69 (IFAS…FHVA), 135–158 (LYTG…LHLQ), 175–199 (LNHH…HVAI), 273–291 (MAHH…GHMY), 330–353 (LHFQ…QHMY), 369–395 (AALY…IFFL), 417–439 (AIIS…LYVH), and 517–535 (FLVH…LILV). The [4Fe-4S] cluster site is built by C559 and C568. Transmembrane regions (helical) follow at residues 575–596 (AFYL…YWHW) and 643–665 (LSVW…MFLI). Chlorophyll a contacts are provided by H654, M662, and Y670. W671 lines the phylloquinone pocket. The chain crosses the membrane as a helical span at residues 707-727 (LVGLAHFSVGYIFTYAAFLIA).

Belongs to the PsaA/PsaB family. As to quaternary structure, the PsaA/B heterodimer binds the P700 chlorophyll special pair and subsequent electron acceptors. PSI consists of a core antenna complex that captures photons, and an electron transfer chain that converts photonic excitation into a charge separation. The eukaryotic PSI reaction center is composed of at least 11 subunits. P700 is a chlorophyll a/chlorophyll a' dimer, A0 is one or more chlorophyll a, A1 is one or both phylloquinones and FX is a shared 4Fe-4S iron-sulfur center. is required as a cofactor.

The protein localises to the plastid. It localises to the chloroplast thylakoid membrane. It carries out the reaction reduced [plastocyanin] + hnu + oxidized [2Fe-2S]-[ferredoxin] = oxidized [plastocyanin] + reduced [2Fe-2S]-[ferredoxin]. Functionally, psaA and PsaB bind P700, the primary electron donor of photosystem I (PSI), as well as the electron acceptors A0, A1 and FX. PSI is a plastocyanin-ferredoxin oxidoreductase, converting photonic excitation into a charge separation, which transfers an electron from the donor P700 chlorophyll pair to the spectroscopically characterized acceptors A0, A1, FX, FA and FB in turn. Oxidized P700 is reduced on the lumenal side of the thylakoid membrane by plastocyanin. The chain is Photosystem I P700 chlorophyll a apoprotein A2 from Adiantum capillus-veneris (Maidenhair fern).